The chain runs to 602 residues: Aspartate--tRNA(Asp/Asn) ligase (602 aa).

Glu-176 provides a ligand contact to L-aspartate. The interval 200 to 203 (QQFK) is aspartate. Residues Arg-222 and His-452 each contribute to the L-aspartate site. 222-224 (RDE) is a binding site for ATP. Residue Glu-490 participates in ATP binding. L-aspartate is bound at residue Arg-497. 542–545 (GIDR) contacts ATP.

This sequence belongs to the class-II aminoacyl-tRNA synthetase family. Type 1 subfamily. As to quaternary structure, homodimer.

The protein localises to the cytoplasm. The catalysed reaction is tRNA(Asx) + L-aspartate + ATP = L-aspartyl-tRNA(Asx) + AMP + diphosphate. Functionally, aspartyl-tRNA synthetase with relaxed tRNA specificity since it is able to aspartylate not only its cognate tRNA(Asp) but also tRNA(Asn). Reaction proceeds in two steps: L-aspartate is first activated by ATP to form Asp-AMP and then transferred to the acceptor end of tRNA(Asp/Asn). This chain is Aspartate--tRNA(Asp/Asn) ligase, found in Rickettsia africae (strain ESF-5).